We begin with the raw amino-acid sequence, 474 residues long: PTS system N-acetylmuramic acid-specific EIIBC component (474 aa).

Positions 1 to 89 constitute a PTS EIIB type-1 domain; sequence MAKEISSELL…SELLGEAPVQ (89 aa). Residues 1 to 123 are Cytoplasmic-facing; that stretch reads MAKEISSELL…LAKFATIFTP (123 aa). C29 serves as the catalytic Phosphocysteine intermediate; for EIIB activity. The 360-residue stretch at 115–474 folds into the PTS EIIC type-1 domain; it reads AKFATIFTPL…LFGCRNVNLD (360 aa). The helical transmembrane segment at 124–144 threads the bilayer; sequence LIPGFIAAGLLLGIATLIATV. The Periplasmic segment spans residues 145–157; it reads MHVPADAQGTLPD. The chain crosses the membrane as a helical span at residues 158-178; that stretch reads ALNFMKVFSKGLFTFLVILVG. Over 179 to 180 the chain is Cytoplasmic; sequence YN. A helical transmembrane segment spans residues 181 to 201; that stretch reads AAQAFGGTGVNGAIIAALFLL. The Periplasmic segment spans residues 202–217; the sequence is GYNPAATTGYYAGFHD. A helical transmembrane segment spans residues 218–238; the sequence is FFGLPIDPRGNIIGVLIAAWA. At 239-260 the chain is on the cytoplasmic side; it reads CARIEGMVRRFMPDDLDMLLTS. The chain crosses the membrane as a helical span at residues 261 to 281; the sequence is LITLLITATLAYLIIMPLGGW. Topologically, residues 282–301 are periplasmic; that stretch reads LFEGMSWLFMHLNSNPLGCA. The chain crosses the membrane as a helical span at residues 302–322; it reads VLAGLFLIAVVFGVHQGFIPV. Topologically, residues 323–334 are cytoplasmic; sequence YLALMDSQGFNS. A helical transmembrane segment spans residues 335-355; that stretch reads LFPILSMAGAGQVGAALALYW. Over 356-368 the chain is Periplasmic; it reads RAQPHSALRSQVR. Residues 369 to 389 traverse the membrane as a helical segment; sequence GAIIPGLLGVGEPLIYGVTLP. Residues 390 to 393 are Cytoplasmic-facing; that stretch reads RMKP. A helical transmembrane segment spans residues 394–414; that stretch reads FITACLGGAAGGLFIGLIAWW. The Periplasmic segment spans residues 415–440; that stretch reads GLPMGLNSAFGPSGLVALPLMTSAQG. The helical transmembrane segment at 441–461 threads the bilayer; that stretch reads ILPAMAVYAGGILVAWVCGFI. Over 462–474 the chain is Cytoplasmic; it reads FTTLFGCRNVNLD.

Its subcellular location is the cell inner membrane. The enzyme catalyses N-acetyl-beta-D-muramate(out) + N(pros)-phospho-L-histidyl-[protein] = N-acetyl-beta-D-muramate 6-phosphate(in) + L-histidyl-[protein]. Its function is as follows. The phosphoenolpyruvate-dependent sugar phosphotransferase system (sugar PTS), a major carbohydrate active transport system, catalyzes the phosphorylation of incoming sugar substrates concomitantly with their translocation across the cell membrane. This system is involved in N-acetylmuramic acid (MurNAc) transport, yielding cytoplasmic MurNAc-6-P. Is also able to take up anhydro-N-acetylmuramic acid (anhMurNAc), but cannot phosphorylate the carbon 6, probably because of the 1,6-anhydro ring. The polypeptide is PTS system N-acetylmuramic acid-specific EIIBC component (murP) (Escherichia coli O157:H7).